A 335-amino-acid chain; its full sequence is MEGIIFGDLSTLPDLLSSLSPYKVVVLTNTTLKELWLEEVLTWLKEFKPQTIVVPDGEKYKDLDTVRYIWEKLLEMGFTRRSLLIGLGGGVITDIAGFVASTYMRGTYLGLVPTTLLAQVDAAIGGKTGINFYGKNIIGTFYLPKFVLICRDFLKTLPMVEILNGLAEVVKYGILDKEVYNAIKTMNSPREIVEREDIIKKSVAVKLRIVEEDLKENGKRRVLNLGHTVGHAIEKISDYKIKHGFAVSMGLVVEAKIGEILYGFDSGKVVEILTKFGLPVKIPFDPYTTLQAMKIDKKAWYGKIVIVVPVEIGKANIEEVDEKIILQALEEAKNA.

NAD(+) contacts are provided by residues 56 to 61, 90 to 94, 114 to 115, Lys127, Lys135, and 153 to 156; these read DGEKYK, GVITD, TT, and FLKT. Zn(2+) is bound by residues Glu168, His227, and His243.

This sequence belongs to the sugar phosphate cyclases superfamily. Dehydroquinate synthase family. It depends on NAD(+) as a cofactor. Requires Co(2+) as cofactor. The cofactor is Zn(2+).

It is found in the cytoplasm. It carries out the reaction 7-phospho-2-dehydro-3-deoxy-D-arabino-heptonate = 3-dehydroquinate + phosphate. It functions in the pathway metabolic intermediate biosynthesis; chorismate biosynthesis; chorismate from D-erythrose 4-phosphate and phosphoenolpyruvate: step 2/7. Functionally, catalyzes the conversion of 3-deoxy-D-arabino-heptulosonate 7-phosphate (DAHP) to dehydroquinate (DHQ). In Pyrococcus furiosus (strain ATCC 43587 / DSM 3638 / JCM 8422 / Vc1), this protein is 3-dehydroquinate synthase.